The chain runs to 114 residues: Iron-sulfur cluster insertion protein ErpA (114 aa).

C42, C106, and C108 together coordinate iron-sulfur cluster.

It belongs to the HesB/IscA family. Homodimer. The cofactor is iron-sulfur cluster.

In terms of biological role, required for insertion of 4Fe-4S clusters for at least IspG. This Enterobacter sp. (strain 638) protein is Iron-sulfur cluster insertion protein ErpA.